A 102-amino-acid polypeptide reads, in one-letter code: Large ribosomal subunit protein bL21 (102 aa).

This sequence belongs to the bacterial ribosomal protein bL21 family. In terms of assembly, part of the 50S ribosomal subunit. Contacts protein L20.

Functionally, this protein binds to 23S rRNA in the presence of protein L20. In Arthrobacter sp. (strain FB24), this protein is Large ribosomal subunit protein bL21.